We begin with the raw amino-acid sequence, 1476 residues long: Cystic fibrosis transmembrane conductance regulator (1476 aa).

The Cytoplasmic portion of the chain corresponds to 1 to 77; sequence MQKSPLEKAS…QLIHALRRCF (77 aa). A helical membrane pass occupies residues 78–98; it reads VWRFVFYGVLLYLGEVTKAVQ. The ABC transmembrane type-1 1 domain maps to 81 to 365; it reads FVFYGVLLYL…TAVQIWYDSL (285 aa). Over 99–122 the chain is Extracellular; sequence PVLLGRIIASYDPDNTEERSIAIY. A helical transmembrane segment spans residues 123-146; the sequence is LGIGLCLLFIVRTLLLHPAIFGLH. The Cytoplasmic segment spans residues 147–195; it reads HIGMQMRIAMFSLIYKKTLKLSSRVLDKISIGQLISLLSNNLNKFDEGL. Residues 196–216 traverse the membrane as a helical segment; the sequence is ALAHFIWIAPLQVVLLMGLLW. The Extracellular portion of the chain corresponds to 217–222; sequence DLLQFS. The chain crosses the membrane as a helical span at residues 223–243; it reads AFCGLGLLIVLVIFQAILGKM. Residues 244 to 298 lie on the Cytoplasmic side of the membrane; that stretch reads MVKYRDKRAAKINERLVITSEVIDNIYSVKAYCWESAMEKIIESLREEELKMTRR. A helical membrane pass occupies residues 299 to 319; that stretch reads SAYMRFFTSSAFFFSGFFVVF. Residues 320–339 are Extracellular-facing; the sequence is LSVLPYTVINGIVLRKIFTT. The chain crosses the membrane as a helical span at residues 340–358; that stretch reads ISFCIVLRMSVTRQFPTAV. Residues 359-853 lie on the Cytoplasmic side of the membrane; the sequence is QIWYDSLGMI…YLRYFTLHRG (495 aa). Residues Trp401, 458–465, and Gln493 each bind ATP; that span reads GSTGAGKT. The ABC transporter 1 domain occupies 412–646; sequence VQLNNDDRKT…RPDFSSKLMG (235 aa). Cys524 is lipidated: S-palmitoyl cysteine. Phosphoserine occurs at positions 549 and 660. The tract at residues 654–826 is disordered R region; it reads TEERRSSILT…EEINEEDLKE (173 aa). Ser670 carries the post-translational modification Phosphoserine; by PKA. Phosphoserine occurs at positions 684, 698, and 710. At Thr715 the chain carries Phosphothreonine. A phosphoserine mark is found at Ser732, Ser763, Ser785, Ser790, and Ser808. A helical transmembrane segment spans residues 854–874; the sequence is LFAVLIWCVLVFLVEVAASLF. The region spanning 854–1153 is the ABC transmembrane type-1 2 domain; that stretch reads LFAVLIWCVL…SSIDTDSLMR (300 aa). The Extracellular portion of the chain corresponds to 875–913; it reads VLWLLKNNPVNGGNNGTKIANTSYVVVITSSSFYYIFYI. N-linked (GlcNAc...) asparagine glycosylation is found at Asn889 and Asn895. Residues 914-934 traverse the membrane as a discontinuously helical segment; it reads YVGVADTLLALSLFRGLPLVH. Residues 935 to 985 are Cytoplasmic-facing; that stretch reads TLITASKILHRKMLHSILHAPMSTFNKLKAGGILNRFSKDIAILDDFLPLT. Residues 986-1006 traverse the membrane as a helical segment; the sequence is IFDFIQLLFIVVGAIIVVSAL. Topologically, residues 1007 to 1008 are extracellular; that stretch reads QP. Residues 1009 to 1029 form a helical membrane-spanning segment; the sequence is YIFLATVPGLAVFILLRAYFL. Over 1030-1090 the chain is Cytoplasmic; that stretch reads HTSQQLKQLE…TANWFMYLAT (61 aa). Residues 1091 to 1111 form a helical membrane-spanning segment; that stretch reads LRWFQMRIDMIFVLFFIVVTF. Over 1112–1125 the chain is Extracellular; the sequence is ISILTTGEGEGTTG. A helical membrane pass occupies residues 1126-1146; it reads IILTLAMNIMSTLQWAVNSSI. At 1147-1476 the chain is on the cytoplasmic side; the sequence is DTDSLMRSVS…TEEEVQETRL (330 aa). The ABC transporter 2 domain occupies 1208-1439; that stretch reads VKDLTVKYVD…KSVFQRALSS (232 aa). ATP contacts are provided by residues Tyr1215 and 1240–1247; that span reads GRTGSGKS. The interaction with GORASP2 stretch occupies residues 1382–1476; it reads RVLRQAFAGC…TEEEVQETRL (95 aa). Cys1391 carries S-palmitoyl cysteine lipidation. 2 positions are modified to phosphoserine: Ser1440 and Ser1452. Residues 1445-1456 show a composition bias toward basic residues; that stretch reads LFHGRHSSKQKP. The segment at 1445–1476 is disordered; that stretch reads LFHGRHSSKQKPRTQITAVKEETEEEVQETRL. Residues 1466 to 1476 show a composition bias toward acidic residues; the sequence is ETEEEVQETRL. The short motif at 1474–1476 is the PDZ-binding element; sequence TRL.

Belongs to the ABC transporter superfamily. ABCC family. CFTR transporter (TC 3.A.1.202) subfamily. In terms of assembly, monomer; does not require oligomerization for channel activity. May form oligomers in the membrane. Interacts with SLC4A7 through NHERF1. Interacts with SHANK2. Interacts with NHERF1 and MYO6. Interacts (via C-terminus) with GOPC (via PDZ domain); this promotes CFTR internalization and thereby decreases channel activity. Interacts with SLC4A7 through NHERF1. Found in a complex with MYO5B and RAB11A. Interacts with ANO1. Interacts with SLC26A8. Interacts with AHCYL1; the interaction increases CFTR activity. Interacts with CSE1L. The core-glycosylated form interacts with GORASP2 (via PDZ GRASP-type 1 domain) in respone to ER stress. Interacts with MARCHF2; the interaction leads to CFTR ubiqtuitination and degradation. Interacts with ADGRG2. In terms of processing, N-glycosylated. Phosphorylated; cAMP treatment promotes phosphorylation and activates the channel. Dephosphorylation decreases the ATPase activity (in vitro). Phosphorylation at PKA sites activates the channel. Phosphorylation at PKC sites enhances the response to phosphorylation by PKA. Phosphorylated by AMPK; this inhibits channel activity. Post-translationally, ubiquitinated, leading to its degradation in the lysosome. Deubiquitination by USP10 in early endosomes enhances its endocytic recycling to the cell membrane. Ubiquitinated by RNF185 during ER stress. Ubiquitinated by MARCHF2. In terms of tissue distribution, detected in epithelial cells in nasopharynx, submandibular gland, pancreas and ileum (at protein level). Expressed in the epididymis. In the caput section of the epididymis, expressed uniformly on both the luminal and basolateral sides of the ducts and on sperm in the caput lumen (at protein level). In the cauda, detected along the luminal border but not continuously and is also expressed on the basolateral surface. Within the caudal lumen, detected on sperm.

It localises to the apical cell membrane. The protein localises to the early endosome membrane. The protein resides in the cell membrane. Its subcellular location is the recycling endosome membrane. It is found in the endoplasmic reticulum membrane. It localises to the nucleus. The catalysed reaction is ATP + H2O + closed Cl(-) channel = ADP + phosphate + open Cl(-) channel.. The enzyme catalyses chloride(in) = chloride(out). It carries out the reaction hydrogencarbonate(in) = hydrogencarbonate(out). It catalyses the reaction ATP + H2O = ADP + phosphate + H(+). Epithelial ion channel that plays an important role in the regulation of epithelial ion and water transport and fluid homeostasis. Mediates the transport of chloride ions across the cell membrane. Possesses an intrinsic ATPase activity and utilizes ATP to gate its channel; the passive flow of anions through the channel is gated by cycles of ATP binding and hydrolysis by the ATP-binding domains. The ion channel is also permeable to HCO(3)(-); selectivity depends on the extracellular chloride concentration. Exerts its function also by modulating the activity of other ion channels and transporters. Contributes to the regulation of the pH and the ion content of the epithelial fluid layer. Modulates the activity of the epithelial sodium channel (ENaC) complex, in part by regulating the cell surface expression of the ENaC complex. May regulate bicarbonate secretion and salvage in epithelial cells by regulating the transporter SLC4A7. Can inhibit the chloride channel activity of ANO1. Plays a role in the chloride and bicarbonate homeostasis during sperm epididymal maturation and capacitation. The chain is Cystic fibrosis transmembrane conductance regulator from Rattus norvegicus (Rat).